A 251-amino-acid chain; its full sequence is Adapter protein MecA (251 aa).

It belongs to the MecA family. As to quaternary structure, homodimer.

Enables the recognition and targeting of unfolded and aggregated proteins to the ClpC protease or to other proteins involved in proteolysis. The sequence is that of Adapter protein MecA from Streptococcus agalactiae serotype III (strain NEM316).